Reading from the N-terminus, the 150-residue chain is Deoxyuridine 5'-triphosphate nucleotidohydrolase (150 aa).

Residues 69 to 71 (RSG), N82, and 86 to 88 (LID) each bind substrate.

This sequence belongs to the dUTPase family. Mg(2+) serves as cofactor.

The catalysed reaction is dUTP + H2O = dUMP + diphosphate + H(+). The protein operates within pyrimidine metabolism; dUMP biosynthesis; dUMP from dCTP (dUTP route): step 2/2. This enzyme is involved in nucleotide metabolism: it produces dUMP, the immediate precursor of thymidine nucleotides and it decreases the intracellular concentration of dUTP so that uracil cannot be incorporated into DNA. In Chromobacterium violaceum (strain ATCC 12472 / DSM 30191 / JCM 1249 / CCUG 213 / NBRC 12614 / NCIMB 9131 / NCTC 9757 / MK), this protein is Deoxyuridine 5'-triphosphate nucleotidohydrolase.